The primary structure comprises 745 residues: Chitin synthase D (745 aa).

The next 5 membrane-spanning stretches (helical) occupy residues 26-46, 55-75, 412-432, 434-454, and 464-484; these read LAHRGIFLPVMIVTLPLPVHL, VLMLQWFAFGMFSVLLIIPWL, TTALLFFIIALSLITTSSSIN, LPVGFIAISLGLNYVLMFYLG, and LFPLMFILNPFFNWLYMVYGI. Disordered stretches follow at residues 613 to 635 and 672 to 745; these read TGDNDNMKPYPDRQPRDTSSLHQ and ILPH…ESMV. The segment covering 707–720 has biased composition (polar residues); that stretch reads NASTRGSMEGNTPE.

It belongs to the chitin synthase family. Class VI subfamily.

Its subcellular location is the cell membrane. It catalyses the reaction [(1-&gt;4)-N-acetyl-beta-D-glucosaminyl](n) + UDP-N-acetyl-alpha-D-glucosamine = [(1-&gt;4)-N-acetyl-beta-D-glucosaminyl](n+1) + UDP + H(+). Its function is as follows. Polymerizes chitin, a structural polymer of the cell wall and septum, by transferring the sugar moiety of UDP-GlcNAc to the non-reducing end of the growing chitin polymer. The sequence is that of Chitin synthase D (chsD) from Aspergillus fumigatus (strain ATCC MYA-4609 / CBS 101355 / FGSC A1100 / Af293) (Neosartorya fumigata).